The sequence spans 286 residues: Myb family transcription factor PHL7 (286 aa).

The HTH myb-type domain occupies 12 to 72 (HASKQRLRWT…HLQKYRLAKY (61 aa)). A DNA-binding region (H-T-H motif) is located at residues 43 to 68 (PKGVLRVMGVQGLTIYHVKSHLQKYR). Positions 74-97 (PDSSSEGKKTDKKESGDMLSGLDG) are disordered. A compositionally biased stretch (basic and acidic residues) spans 78–89 (SEGKKTDKKESG). Residues 104-124 (TEALKLQMEVQKRLHEQLEVQ) adopt a coiled-coil conformation. The LHEQLE motif lies at 117 to 122 (LHEQLE). Residues 152-227 (LGEPSAPVTG…TGEERLSKKP (76 aa)) are disordered.

This sequence belongs to the MYB-CC family.

Its subcellular location is the nucleus. This Arabidopsis thaliana (Mouse-ear cress) protein is Myb family transcription factor PHL7.